A 149-amino-acid chain; its full sequence is D-aminoacyl-tRNA deacylase (149 aa).

The Gly-cisPro motif, important for rejection of L-amino acids signature appears at 137 to 138; sequence GP.

It belongs to the DTD family. As to quaternary structure, homodimer.

Its subcellular location is the cytoplasm. It catalyses the reaction glycyl-tRNA(Ala) + H2O = tRNA(Ala) + glycine + H(+). The catalysed reaction is a D-aminoacyl-tRNA + H2O = a tRNA + a D-alpha-amino acid + H(+). An aminoacyl-tRNA editing enzyme that deacylates mischarged D-aminoacyl-tRNAs. Also deacylates mischarged glycyl-tRNA(Ala), protecting cells against glycine mischarging by AlaRS. Acts via tRNA-based rather than protein-based catalysis; rejects L-amino acids rather than detecting D-amino acids in the active site. By recycling D-aminoacyl-tRNA to D-amino acids and free tRNA molecules, this enzyme counteracts the toxicity associated with the formation of D-aminoacyl-tRNA entities in vivo and helps enforce protein L-homochirality. This chain is D-aminoacyl-tRNA deacylase, found in Clostridium botulinum (strain Loch Maree / Type A3).